The sequence spans 137 residues: MSEEQKLVISSARRKTARATCYIYAGKGRVFVNNVPIELIPIEMVRLKIMEPLLLAGNDIRSKIDAKIITYGGGIMGQADAARMALARALVKFTGSKELEKIYRAYDRTMLAGDPRQTESEKWMRYSARRWRQKSYR.

This sequence belongs to the universal ribosomal protein uS9 family.

The protein is Small ribosomal subunit protein uS9 (rps9) of Saccharolobus solfataricus (strain ATCC 35092 / DSM 1617 / JCM 11322 / P2) (Sulfolobus solfataricus).